Here is a 207-residue protein sequence, read N- to C-terminus: Protein MK0488 (207 aa).

One can recognise an AMMECR1 domain in the interval 8 to 200 (EEGEFLVRLA…EEEPEGPVRE (193 aa)).

The polypeptide is Protein MK0488 (Methanopyrus kandleri (strain AV19 / DSM 6324 / JCM 9639 / NBRC 100938)).